A 362-amino-acid chain; its full sequence is Peptide chain release factor 1 (362 aa).

Glutamine 240 is subject to N5-methylglutamine.

It belongs to the prokaryotic/mitochondrial release factor family. In terms of processing, methylated by PrmC. Methylation increases the termination efficiency of RF1.

Its subcellular location is the cytoplasm. In terms of biological role, peptide chain release factor 1 directs the termination of translation in response to the peptide chain termination codons UAG and UAA. This Bifidobacterium longum (strain NCC 2705) protein is Peptide chain release factor 1.